We begin with the raw amino-acid sequence, 67 residues long: Large ribosomal subunit protein uL29 (67 aa).

The protein belongs to the universal ribosomal protein uL29 family.

The sequence is that of Large ribosomal subunit protein uL29 from Clostridium acetobutylicum (strain ATCC 824 / DSM 792 / JCM 1419 / IAM 19013 / LMG 5710 / NBRC 13948 / NRRL B-527 / VKM B-1787 / 2291 / W).